Here is an 89-residue protein sequence, read N- to C-terminus: Small ribosomal subunit protein uS15 (89 aa).

Belongs to the universal ribosomal protein uS15 family. As to quaternary structure, part of the 30S ribosomal subunit. Forms a bridge to the 50S subunit in the 70S ribosome, contacting the 23S rRNA.

In terms of biological role, one of the primary rRNA binding proteins, it binds directly to 16S rRNA where it helps nucleate assembly of the platform of the 30S subunit by binding and bridging several RNA helices of the 16S rRNA. Its function is as follows. Forms an intersubunit bridge (bridge B4) with the 23S rRNA of the 50S subunit in the ribosome. The sequence is that of Small ribosomal subunit protein uS15 from Cereibacter sphaeroides (strain ATCC 17025 / ATH 2.4.3) (Rhodobacter sphaeroides).